The sequence spans 192 residues: Type-4 uracil-DNA glycosylase (192 aa).

The [4Fe-4S] cluster site is built by Cys-18 and Cys-21. Uracil-binding positions include 45 to 47 (GEG), Phe-59, and Asn-85. Residues Cys-89 and Cys-105 each coordinate [4Fe-4S] cluster. His-161 is a uracil binding site.

Belongs to the uracil-DNA glycosylase (UDG) superfamily. Type 4 (UDGa) family.

The enzyme catalyses Hydrolyzes single-stranded DNA or mismatched double-stranded DNA and polynucleotides, releasing free uracil.. Removes uracil bases that are present in DNA as a result of either deamination of cytosine or misincorporation of dUMP instead of dTMP. Can remove uracil from double-stranded DNA containing either a U/G or U/A base pair as well as from single-stranded DNA. The sequence is that of Type-4 uracil-DNA glycosylase from Thermotoga maritima (strain ATCC 43589 / DSM 3109 / JCM 10099 / NBRC 100826 / MSB8).